The primary structure comprises 466 residues: Asparagine--tRNA ligase (466 aa).

Belongs to the class-II aminoacyl-tRNA synthetase family. As to quaternary structure, homodimer.

It localises to the cytoplasm. It carries out the reaction tRNA(Asn) + L-asparagine + ATP = L-asparaginyl-tRNA(Asn) + AMP + diphosphate + H(+). This Serratia proteamaculans (strain 568) protein is Asparagine--tRNA ligase.